The chain runs to 72 residues: Translation initiation factor IF-1 (72 aa).

One can recognise an S1-like domain in the interval 1 to 72 (MAKDDVIEVD…DKGRITFRYK (72 aa)).

It belongs to the IF-1 family. In terms of assembly, component of the 30S ribosomal translation pre-initiation complex which assembles on the 30S ribosome in the order IF-2 and IF-3, IF-1 and N-formylmethionyl-tRNA(fMet); mRNA recruitment can occur at any time during PIC assembly.

Its subcellular location is the cytoplasm. In terms of biological role, one of the essential components for the initiation of protein synthesis. Stabilizes the binding of IF-2 and IF-3 on the 30S subunit to which N-formylmethionyl-tRNA(fMet) subsequently binds. Helps modulate mRNA selection, yielding the 30S pre-initiation complex (PIC). Upon addition of the 50S ribosomal subunit IF-1, IF-2 and IF-3 are released leaving the mature 70S translation initiation complex. This Wolinella succinogenes (strain ATCC 29543 / DSM 1740 / CCUG 13145 / JCM 31913 / LMG 7466 / NCTC 11488 / FDC 602W) (Vibrio succinogenes) protein is Translation initiation factor IF-1.